The primary structure comprises 319 residues: HTH-type transcriptional regulator YidZ (319 aa).

One can recognise an HTH lysR-type domain in the interval 8–65 (LDLNLLLCLQLLMQERSVTKAAKRINVTPSAVSKSLAKLRAWFDDPLFVNSPLGLSPT). A DNA-binding region (H-T-H motif) is located at residues 25 to 44 (VTKAAKRINVTPSAVSKSLA).

Belongs to the LysR transcriptional regulatory family.

Involved in anaerobic NO protection. The polypeptide is HTH-type transcriptional regulator YidZ (Escherichia coli (strain K12 / MC4100 / BW2952)).